Here is a 64-residue protein sequence, read N- to C-terminus: DNA gyrase inhibitor YacG (64 aa).

Cys9, Cys12, Cys28, and Cys32 together coordinate Zn(2+). A disordered region spans residues 42–64 (DEENAIPGAPDMSDSDGWSEEQY). Over residues 54-64 (SDSDGWSEEQY) the composition is skewed to acidic residues.

The protein belongs to the DNA gyrase inhibitor YacG family. In terms of assembly, interacts with GyrB. The cofactor is Zn(2+).

Functionally, inhibits all the catalytic activities of DNA gyrase by preventing its interaction with DNA. Acts by binding directly to the C-terminal domain of GyrB, which probably disrupts DNA binding by the gyrase. This is DNA gyrase inhibitor YacG from Vibrio vulnificus (strain YJ016).